Here is a 280-residue protein sequence, read N- to C-terminus: 4-diphosphocytidyl-2-C-methyl-D-erythritol kinase (280 aa).

Lysine 11 is an active-site residue. 95–105 (PVAAGLGGGSS) is a binding site for ATP. Aspartate 137 is an active-site residue.

This sequence belongs to the GHMP kinase family. IspE subfamily.

It carries out the reaction 4-CDP-2-C-methyl-D-erythritol + ATP = 4-CDP-2-C-methyl-D-erythritol 2-phosphate + ADP + H(+). The protein operates within isoprenoid biosynthesis; isopentenyl diphosphate biosynthesis via DXP pathway; isopentenyl diphosphate from 1-deoxy-D-xylulose 5-phosphate: step 3/6. Catalyzes the phosphorylation of the position 2 hydroxy group of 4-diphosphocytidyl-2C-methyl-D-erythritol. This chain is 4-diphosphocytidyl-2-C-methyl-D-erythritol kinase, found in Pelobacter propionicus (strain DSM 2379 / NBRC 103807 / OttBd1).